A 135-amino-acid chain; its full sequence is Crustacean hyperglycemic hormones A* (135 aa).

Positions 1–26 are cleaved as a signal peptide; the sequence is MVSFRTMWSVVVVVVVASLASSGVQG. Gln-62 carries the post-translational modification Pyrrolidone carboxylic acid. 3 disulfide bridges follow: Cys-68–Cys-104, Cys-84–Cys-100, and Cys-87–Cys-113. Val-133 carries the post-translational modification Valine amide.

The protein belongs to the arthropod CHH/MIH/GIH/VIH hormone family. Produced by the medulla terminalis X-organ in the eyestalks and transported to the sinus gland where they are stored and released.

The protein localises to the secreted. Its function is as follows. Hormone found in the sinus gland of isopods and decapods which controls the blood sugar level. Has a secretagogue action over the amylase released from the midgut gland. May act as a stress hormone and may be involved in the control of molting and reproduction. The chain is Crustacean hyperglycemic hormones A* (CHHA*) from Faxonius limosus (Spinycheek crayfish).